The primary structure comprises 160 residues: Crossover junction endodeoxyribonuclease RuvC (160 aa).

Active-site residues include aspartate 9, glutamate 68, and aspartate 141. 3 residues coordinate Mg(2+): aspartate 9, glutamate 68, and aspartate 141.

The protein belongs to the RuvC family. Homodimer which binds Holliday junction (HJ) DNA. The HJ becomes 2-fold symmetrical on binding to RuvC with unstacked arms; it has a different conformation from HJ DNA in complex with RuvA. In the full resolvosome a probable DNA-RuvA(4)-RuvB(12)-RuvC(2) complex forms which resolves the HJ. Mg(2+) is required as a cofactor.

The protein localises to the cytoplasm. The catalysed reaction is Endonucleolytic cleavage at a junction such as a reciprocal single-stranded crossover between two homologous DNA duplexes (Holliday junction).. The RuvA-RuvB-RuvC complex processes Holliday junction (HJ) DNA during genetic recombination and DNA repair. Endonuclease that resolves HJ intermediates. Cleaves cruciform DNA by making single-stranded nicks across the HJ at symmetrical positions within the homologous arms, yielding a 5'-phosphate and a 3'-hydroxyl group; requires a central core of homology in the junction. The consensus cleavage sequence is 5'-(A/T)TT(C/G)-3'. Cleavage occurs on the 3'-side of the TT dinucleotide at the point of strand exchange. HJ branch migration catalyzed by RuvA-RuvB allows RuvC to scan DNA until it finds its consensus sequence, where it cleaves and resolves the cruciform DNA. The polypeptide is Crossover junction endodeoxyribonuclease RuvC (Campylobacter jejuni subsp. jejuni serotype O:2 (strain ATCC 700819 / NCTC 11168)).